The following is a 307-amino-acid chain: Ribonuclease Z (307 aa).

7 residues coordinate Zn(2+): H61, H63, D65, H66, H138, D208, and H264. D65 (proton acceptor) is an active-site residue.

This sequence belongs to the RNase Z family. Homodimer. It depends on Zn(2+) as a cofactor.

The enzyme catalyses Endonucleolytic cleavage of RNA, removing extra 3' nucleotides from tRNA precursor, generating 3' termini of tRNAs. A 3'-hydroxy group is left at the tRNA terminus and a 5'-phosphoryl group is left at the trailer molecule.. In terms of biological role, zinc phosphodiesterase, which displays some tRNA 3'-processing endonuclease activity. Probably involved in tRNA maturation, by removing a 3'-trailer from precursor tRNA. This is Ribonuclease Z from Pyrococcus abyssi (strain GE5 / Orsay).